The chain runs to 876 residues: Alanine--tRNA ligase (876 aa).

Zn(2+) contacts are provided by H564, H568, C666, and H670.

It belongs to the class-II aminoacyl-tRNA synthetase family. The cofactor is Zn(2+).

It is found in the cytoplasm. It catalyses the reaction tRNA(Ala) + L-alanine + ATP = L-alanyl-tRNA(Ala) + AMP + diphosphate. Catalyzes the attachment of alanine to tRNA(Ala) in a two-step reaction: alanine is first activated by ATP to form Ala-AMP and then transferred to the acceptor end of tRNA(Ala). Also edits incorrectly charged Ser-tRNA(Ala) and Gly-tRNA(Ala) via its editing domain. In Colwellia psychrerythraea (strain 34H / ATCC BAA-681) (Vibrio psychroerythus), this protein is Alanine--tRNA ligase.